The following is a 459-amino-acid chain: Phosphoglucosamine mutase (459 aa).

The active-site Phosphoserine intermediate is Ser-106. Ser-106, Asp-247, Asp-249, and Asp-251 together coordinate Mg(2+). Position 106 is a phosphoserine (Ser-106).

It belongs to the phosphohexose mutase family. Requires Mg(2+) as cofactor. In terms of processing, activated by phosphorylation.

It carries out the reaction alpha-D-glucosamine 1-phosphate = D-glucosamine 6-phosphate. In terms of biological role, catalyzes the conversion of glucosamine-6-phosphate to glucosamine-1-phosphate. The protein is Phosphoglucosamine mutase of Chlamydia muridarum (strain MoPn / Nigg).